We begin with the raw amino-acid sequence, 866 residues long: MAAFPAYLALLSYLVPGALSHPEAKTLTSRASTEAYSPPYYPAPNGGWISEWASAYEKAHRVVSNMTLAEKVNLTSGTGIYMGPCAGQTGSVPRFGIPNLCLHDSPLGVRNSDHNTAFPAGITVGATFDKDLMYERGVGLGEEARGKGINVLLGPSVGPIGRKPRGGRNWEGFGADPSLQAFGGSLTIKGMQSTGAIASLKHLIGNEQEQHRMSSVITQGYSSNIDDRTLHELYLWPFAESVRAGAGSVMIAYNDVNRSACSQNSKLINGILKDELGFQGFVVTDWLAHIGGVSSALAGLDMSMPGDGAIPLLGTSYWSWELSRSVLNGSVPVERLNDMVTRIVATWYKMGQDKDYPLPNFSSNTEDETGPLYPGALFSPSGIVNQYVNVQGNHNVTARAIARDAITLLKNNDNVLPLKRNNTLKIFGTDAGTNSDGINSCTDKGCNKGVLTMGWGSGTSRLPYLITPQEAIANISSNAGFHITDTFPSGVTAGPDDIAIVFINSDSGENYITVDGNPGDRTLAGLHAWHNGDNLVKAAAEKFSNVVVVVHTVGPILMEEWIDLDSVKAVLVAHLPGQEAGWSLTDILFGDYSPSGHLPYTIPHSESDYPESVGLIAQPFGQIQDDYTEGLYIDYRHFLKANITPRYPFGHGLSYTTFNFTEPNLSIIKALDTAYPAARPPKGSTPTYPTAKPDASEVAWPKNFNRIWRYLYPYLDNPEGAAANSSKTYPYPDGYTTEPKPAPRAGGAEGGNPALWDVTFSVQVKVTNTGSRDGRAVAQLYVELPSSLGLDTPSRQLRQFEKTKILAAGESEVLTLDVTRKDLSVWDVVVQDWKAPVNGEGVKIWVGESVADLRVGCVVGEGCSTL.

The signal sequence occupies residues 1 to 20 (MAAFPAYLALLSYLVPGALS). Asn-65, Asn-73, and Asn-257 each carry an N-linked (GlcNAc...) asparagine glycan. The active site involves Asp-285. Residues Asn-328, Asn-360, Asn-395, Asn-421, Asn-474, Asn-659, Asn-664, and Asn-724 are each glycosylated (N-linked (GlcNAc...) asparagine). A disordered region spans residues 725–748 (SSKTYPYPDGYTTEPKPAPRAGGA).

Belongs to the glycosyl hydrolase 3 family.

The protein resides in the secreted. It carries out the reaction Hydrolysis of terminal, non-reducing beta-D-glucosyl residues with release of beta-D-glucose.. It functions in the pathway glycan metabolism; cellulose degradation. In terms of biological role, beta-glucosidases are one of a number of cellulolytic enzymes involved in the degradation of cellulosic biomass. Catalyzes the last step releasing glucose from the inhibitory cellobiose. The polypeptide is Probable beta-glucosidase F (bglF) (Aspergillus flavus (strain ATCC 200026 / FGSC A1120 / IAM 13836 / NRRL 3357 / JCM 12722 / SRRC 167)).